Reading from the N-terminus, the 1151-residue chain is Protein BREAST CANCER SUSCEPTIBILITY 2 homolog A (1151 aa).

BRCA2 repeat units lie at residues 63-97 (MPGEIPMFRTGLGKSVVLKESSIAKAKSILAEKVT), 116-150 (TAETLPMFRTASGKSVPLKESSIAKAMSILGSDKI), 163-197 (FGVSNSLFQTASNKKVNVSSAGLARAKALLGLEED), and 257-291 (LKVPPTKFQTAGGKSLSVSAEALKRARNLLGDPEL). Residues 408–427 (GFIPRGRQPGRPADQPLVDI) form a disordered region.

As to quaternary structure, interacts with RAD51 and DMC1. Interacts with DSS1(I). In terms of tissue distribution, expressed in flower buds.

Involved in double-strand break repair and/or homologous recombination by mediating RAD51- and DMC1-facilitated DNA repair. Plays an essential role in both somatic and meiotic homologous recombination. Is crucial for the formation of RAD51 and DMC1 foci during male meiotic homologous recombination in prophase I. In Arabidopsis thaliana (Mouse-ear cress), this protein is Protein BREAST CANCER SUSCEPTIBILITY 2 homolog A.